The primary structure comprises 513 residues: Nuclear pore complex protein NUP58 (513 aa).

3 disordered regions span residues 28 to 62 (QTNS…QPQQ), 217 to 239 (SVGS…GQQQ), and 356 to 513 (RETA…TTRR). The span at 30–50 (NSIFSQSQPQQTNSIFSQSQP) shows a compositional bias: polar residues. Composition is skewed to low complexity over residues 51 to 62 (QQTNSIFSQPQQ) and 217 to 227 (SVGSQPSQGQG). Positions 356–365 (RETAKQEAAA) are enriched in basic and acidic residues. The span at 377–386 (STTSTQPSTQ) shows a compositional bias: low complexity. The span at 393-427 (SSATPGGSNPPQTSVPTSNPSSGAGFSFLNTPASG) shows a compositional bias: polar residues. Low complexity predominate over residues 428 to 446 (PSSSLFATPSSTAPTSSLF). 6 repeat units span residues 446 to 447 (FG), 458 to 459 (FG), 466 to 467 (FG), 473 to 474 (FG), 486 to 487 (FG), and 497 to 498 (FG). The tract at residues 446–498 (FGPSPTPTQTPLFGSSPASTFGSTQSLFGQTTPSLTMPSQFGGATPGSGASFG) is 6 X 2 AA repeats of F-G. Positions 452 to 484 (PTQTPLFGSSPASTFGSTQSLFGQTTPSLTMPS) are enriched in polar residues. Basic residues predominate over residues 504–513 (SRPKSRTTRR).

It belongs to the NUP58 family. As to quaternary structure, part of the nuclear pore complex (NPC). The NPC has an eight-fold symmetrical structure comprising a central transport channel and two rings, the cytoplasmic and nuclear rings, to which eight filaments are attached. The cytoplasmic filaments have loose ends, while the nuclear filaments are joined in a distal ring, forming a nuclear basket. NPCs are highly dynamic in configuration and composition, and can be devided in 3 subcomplexes, the NUP62 subcomplex, the NUP107-160 subcomplex and the NUP93 subcomplex, containing approximately 30 different nucleoporin proteins. Interacts with GAI, NUP62, SKP1A and SKP1B. In terms of tissue distribution, ubiquitous. Higherst expression in cauline leaves, lowest in roots.

The protein resides in the nucleus envelope. The protein localises to the nucleus. It localises to the nuclear pore complex. Its function is as follows. Involved in nucleocytoplasmic trafficking. May have regulatory roles in the gibberellin pathway, in auxin signaling and in light perception. The polypeptide is Nuclear pore complex protein NUP58 (Arabidopsis thaliana (Mouse-ear cress)).